The sequence spans 720 residues: Phosphatase and actin regulator 4 (720 aa).

The disordered stretch occupies residues 1 to 48; sequence MGQPRFSRPVHPAAAAEEVDHPPSDAGMGVDVLESGDTTPPTKRKSKF. An RPEL 1 repeat occupies 74 to 99; that stretch reads EVLERKISMRKPREELVKRGVLLEDP. Disordered regions lie at residues 294 to 417, 454 to 568, and 610 to 648; these read SGTG…GLPR, NDGF…DTLA, and RPTA…LSQR. Pro residues predominate over residues 346 to 368; it reads TYPPPSPSPPLPTHIPPEPPRMP. The segment covering 393 to 405 has biased composition (basic and acidic residues); sequence KDFRSLEVSKRTA. Acidic residues-rich tracts occupy residues 481–494, 521–534, and 542–551; these read DDEE…EEEQ, EEQE…DSDS, and DDEEDEEEDE. 2 RPEL repeats span residues 601–626 and 639–664; these read TTLI…QPKN and RRLT…RFNE. Positions 626–636 are enriched in basic and acidic residues; that stretch reads NEADRQAEKRE. A compositionally biased stretch (basic residues) spans 637-646; the sequence is IKRRLTRKLS.

The protein belongs to the phosphatase and actin regulator family. As to quaternary structure, binds PPP1CA and actin.

It is found in the cytoplasm. It localises to the cell projection. The protein localises to the lamellipodium. In terms of biological role, regulator of protein phosphatase 1 (PP1) required for neural tube and optic fissure closure, and enteric neural crest cell (ENCCs) migration during development. Acts as an activator of PP1. During neural tube closure, localizes to the ventral neural tube and activates PP1, leading to down-regulate cell proliferation within cranial neural tissue and the neural retina. Also acts as a regulator of migration of enteric neural crest cells (ENCCs) by activating PP1, leading to repression of the integrin signaling through the RHO/ROCK pathway. This chain is Phosphatase and actin regulator 4 (PHACTR4), found in Gallus gallus (Chicken).